We begin with the raw amino-acid sequence, 557 residues long: MESESIRRMGNACIPLKRIAYFLCLFSVVLLTEGKKPAKPKCPAVCTCSKDNALCENARSIPRTVPPDVISLSFVRSGFTEISEGSFLFTPSLQLLLFTSNSFDVISDDAFIGLPHLEYLFIENNNIKSISRHTFRGLKSLIHLSLANNNLQTLPKDIFKGLDSLTNVDLRGNSFNCDCKLKWLVEWLGHTNATVEDIYCEGPPEYKKRKINSLSPKDFDCIITEFAKSQDLPYQSLSIDTFSYLNDEYVVIAQPFTGKCIFLEWDHVEKTFRNYDNITGTSTVVCKPIVIDTQLYVIVAQLFGGSHIYKRDGFANKFIKIQDIEVLKIRKPNDIETFKIEDNWYFVVADSSKAGFTTIYKWNGNGFYSHQSLHAWYRDTDVEYLEIARPPLTLRTPHLILSSSSQRPVIYQWSKATQLFINQTDIPNMEDVYAVKHFSVKGDVYICLTRFIGDSKVMKWGGSSFQDIQRMPSRGSMVFQPLQINNYQYAILGSDYSFTQVYNWDAEKAKFVKFQELNVQAPRSFTHVSINKRNFLFASSFKGNTQIYKHVIVDLSA.

Positions 1–34 (MESESIRRMGNACIPLKRIAYFLCLFSVVLLTEG) are cleaved as a signal peptide. Positions 35 to 72 (KKPAKPKCPAVCTCSKDNALCENARSIPRTVPPDVISL) constitute an LRRNT domain. 3 LRR repeats span residues 92–113 (SLQL…AFIG), 116–137 (HLEY…TFRG), and 140–161 (SLIH…IFKG). The LRRCT domain occupies 173–223 (NSFNCDCKLKWLVEWLGHTNATVEDIYCEGPPEYKKRKINSLSPKDFDCII). N-linked (GlcNAc...) asparagine glycosylation occurs at asparagine 192. 7 EAR repeats span residues 225-267 (EFAK…EWDH), 271-313 (TFRN…KRDG), 317-364 (KFIK…KWNG), 366-415 (GFYS…QWSK), 419-462 (LFIN…KWGG), 464-506 (SFQD…NWDA), and 510-552 (KFVK…KHVI). The N-linked (GlcNAc...) asparagine glycan is linked to asparagine 277. Asparagine 422 carries N-linked (GlcNAc...) asparagine glycosylation.

In terms of assembly, oligomer. Interacts with KCNA1 within a complex containing KCNA1, KCNA4 and KCNAB1. Can bind to ADAM11 and ADAM23. Part of a complex containing ADAM22, DLG4/PSD95 and CACNG2 (stargazin). Post-translationally, glycosylated. As to expression, expressed in brain. High levels found in hippocampus, thalamic nuclei, neocortex, and molecular and granule cell layers of the cerebellum.

The protein resides in the secreted. It is found in the synapse. Its subcellular location is the cytoplasm. Plays a role in suppressing the production of MMP1/3 through the phosphatidylinositol 3-kinase/ERK pathway. Regulates voltage-gated potassium channels assembled from KCNA1, KCNA4 and KCNAB1. It slows down channel inactivation by precluding channel closure mediated by the KCNAB1 subunit. Ligand for ADAM22 that positively regulates synaptic transmission mediated by AMPA-type glutamate receptors. This is Leucine-rich glioma-inactivated protein 1 (Lgi1) from Rattus norvegicus (Rat).